Consider the following 162-residue polypeptide: Phospholipase A and acyltransferase 3 (162 aa).

Residues 1–133 (MRAPIPEPKP…VARSDQVRDV (133 aa)) lie on the Cytoplasmic side of the membrane. An LRAT domain is found at 13-129 (LIEIFRPFYR…LRYGVARSDQ (117 aa)). Catalysis depends on residues His-23 and His-35. Residue Cys-113 is the Acyl-thioester intermediate of the active site. The helical transmembrane segment at 134 to 154 (IIAASAAGMGLAAMSLIGVMF) threads the bilayer. The Lumenal portion of the chain corresponds to 155–162 (SRNKRQKQ).

This sequence belongs to the H-rev107 family. In terms of assembly, interacts with PPP2R1A; this interaction might decrease PP2A activity.

It is found in the cell membrane. Its subcellular location is the cytoplasm. The protein resides in the cytosol. It localises to the perinuclear region. The protein localises to the peroxisome membrane. It is found in the mitochondrion membrane. Its subcellular location is the nucleus envelope. The protein resides in the lysosome membrane. It localises to the endoplasmic reticulum membrane. The enzyme catalyses a 1,2-diacyl-sn-glycero-3-phosphocholine + H2O = a 1-acyl-sn-glycero-3-phosphocholine + a fatty acid + H(+). It carries out the reaction a 1,2-diacyl-sn-glycero-3-phosphocholine + H2O = a 2-acyl-sn-glycero-3-phosphocholine + a fatty acid + H(+). It catalyses the reaction 1,2-dihexadecanoyl-sn-glycero-3-phosphocholine + H2O = 1-hexadecanoyl-sn-glycero-3-phosphocholine + hexadecanoate + H(+). The catalysed reaction is 1,2-dihexadecanoyl-sn-glycero-3-phosphocholine + H2O = 2-hexadecanoyl-sn-glycero-3-phosphocholine + hexadecanoate + H(+). The enzyme catalyses 1-hexadecanoyl-2-(9Z-octadecenoyl)-sn-glycero-3-phosphocholine + H2O = 2-(9Z-octadecenoyl)-sn-glycero-3-phosphocholine + hexadecanoate + H(+). It carries out the reaction 1-hexadecanoyl-2-(9Z-octadecenoyl)-sn-glycero-3-phosphocholine + H2O = 1-hexadecanoyl-sn-glycero-3-phosphocholine + (9Z)-octadecenoate + H(+). It catalyses the reaction 1-hexadecanoyl-2-(5Z,8Z,11Z,14Z-eicosatetraenoyl)-sn-glycero-3-phosphocholine + H2O = 1-hexadecanoyl-sn-glycero-3-phosphocholine + (5Z,8Z,11Z,14Z)-eicosatetraenoate + H(+). The catalysed reaction is 1-hexadecanoyl-2-(5Z,8Z,11Z,14Z-eicosatetraenoyl)-sn-glycero-3-phosphocholine + H2O = 2-(5Z,8Z,11Z,14Z)-eicosatetraenoyl-sn-glycero-3-phosphocholine + hexadecanoate + H(+). The enzyme catalyses 1-hexadecanoyl-2-(9Z,12Z-octadecadienoyl)-sn-glycero-3-phosphoethanolamine + H2O = 1-hexadecanoyl-sn-glycero-3-phosphoethanolamine + (9Z,12Z)-octadecadienoate + H(+). It carries out the reaction 1-hexadecanoyl-2-(9Z,12Z-octadecadienoyl)-sn-glycero-3-phosphoethanolamine + H2O = 2-(9Z,12Z)-octadecadienoyl-sn-glycero-3-phosphoethanolamine + hexadecanoate + H(+). It catalyses the reaction 1-hexadecanoyl-2-(5Z,8Z,11Z,14Z-eicosatetraenoyl)-sn-glycero-3-phosphoethanolamine + H2O = 1-hexadecanoyl-sn-glycero-3-phosphoethanolamine + (5Z,8Z,11Z,14Z)-eicosatetraenoate + H(+). The catalysed reaction is 1-hexadecanoyl-2-(5Z,8Z,11Z,14Z-eicosatetraenoyl)-sn-glycero-3-phosphoethanolamine + H2O = 2-(5Z,8Z,11Z,14Z)-eicosatetraenoyl-sn-glycero-3-phosphoethanolamine + hexadecanoate + H(+). The enzyme catalyses 1-hexanoyl-2-acyl-sn-glycero-3-phosphocholine + H2O = hexanoate + a 2-acyl-sn-glycero-3-phosphocholine + H(+). It carries out the reaction 1-hexanoyl-2-acyl-sn-glycero-3-phosphocholine + H2O = 1-hexanoyl-sn-glycero-3-phosphocholine + a fatty acid + H(+). It catalyses the reaction 1,2-diheptadecanoyl-sn-glycero-3-phosphoethanolamine + 1-(9Z-octadecenoyl)-2-hexadecanoyl-sn-glycero-3-phosphocholine = 1,2-diheptadecanoyl-sn-glycero-3-phospho-N-hexadecanoyl-ethanolamine + 1-(9Z-octadecenoyl)-sn-glycero-3-phosphocholine + H(+). The catalysed reaction is 1,2-diheptadecanoyl-sn-glycero-3-phosphoethanolamine + 1-(9Z-octadecenoyl)-2-hexadecanoyl-sn-glycero-3-phosphocholine = 1,2-diheptadecanoyl-sn-glycero-3-phospho-N-(9Z-octadecenoyl)-ethanolamine + 2-hexadecanoyl-sn-glycero-3-phosphocholine + H(+). The enzyme catalyses 1,2-dihexanoyl-sn-glycero-3-phosphoethanolamine + 2-heptanoyl-sn-glycero-3-phosphocholine = hexanoyl-sn-glycero-3-phosphoethanolamine + 1-hexanoyl-2-heptanoyl-sn-glycero-3-phosphocholine. It carries out the reaction 1-hexadecanoyl-2-octadecanoyl-sn-glycero-3-phosphocholine + H2O = octadecanoate + 1-hexadecanoyl-sn-glycero-3-phosphocholine + H(+). It catalyses the reaction 1-hexadecanoyl-2-octadecanoyl-sn-glycero-3-phosphocholine + H2O = 2-octadecanoyl-sn-glycero-3-phosphocholine + hexadecanoate + H(+). The catalysed reaction is 1-octadecanoyl-2-hexadecanoyl-sn-glycero-3-phosphocholine + H2O = 1-octadecanoyl-sn-glycero-3-phosphocholine + hexadecanoate + H(+). The enzyme catalyses 1-octadecanoyl-2-hexadecanoyl-sn-glycero-3-phosphocholine + H2O = 2-hexadecanoyl-sn-glycero-3-phosphocholine + octadecanoate + H(+). It carries out the reaction 1-hexadecanoyl-2-(9Z,12Z-octadecadienoyl)-sn-glycero-3-phosphocholine + H2O = (9Z,12Z)-octadecadienoate + 1-hexadecanoyl-sn-glycero-3-phosphocholine + H(+). It catalyses the reaction 1-hexadecanoyl-2-(9Z,12Z-octadecadienoyl)-sn-glycero-3-phosphocholine + H2O = 2-(9Z,12Z-octadecadienoyl)-sn-glycero-3-phosphocholine + hexadecanoate + H(+). The catalysed reaction is 1,2-di-(9Z-octadecenoyl)-sn-glycero-3-phosphocholine + H2O = 2-(9Z-octadecenoyl)-sn-glycero-3-phosphocholine + (9Z)-octadecenoate + H(+). The enzyme catalyses 1,2-dihexadecanoyl-sn-glycero-3-phosphocholine + H2O = hexadecanoyl-sn-glycero-3-phosphocholine + hexadecanoate + H(+). It carries out the reaction 1,2-di-(9Z-octadecenoyl)-sn-glycero-3-phosphocholine + H2O = 1-(9Z-octadecenoyl)-sn-glycero-3-phosphocholine + (9Z)-octadecenoate + H(+). It catalyses the reaction 1,2-di-(9Z-octadecenoyl)-sn-glycero-3-phosphoethanolamine + 1,2-dihexadecanoyl-sn-glycero-3-phosphocholine = hexadecanoyl-sn-glycero-3-phosphocholine + N-hexadecanoyl-1,2-di-(9Z-octadecenoyl)-sn-glycero-3-phosphoethanolamine + H(+). The catalysed reaction is 1,2-di-(9Z,12Z-octadecadienoyl)-sn-glycero-3-phosphocholine + H2O = 1-(9Z,12Z)-octadecadienoyl-sn-glycero-3-phosphocholine + (9Z,12Z)-octadecadienoate + H(+). Its function is as follows. Exhibits both phospholipase A1/2 and acyltransferase activities. Shows phospholipase A1 (PLA1) and A2 (PLA2), catalyzing the calcium-independent release of fatty acids from the sn-1 or sn-2 position of glycerophospholipids. For most substrates, PLA1 activity is much higher than PLA2 activity. Shows O-acyltransferase activity, catalyzing the transfer of a fatty acyl group from glycerophospholipid to the hydroxyl group of lysophospholipid. Shows N-acyltransferase activity, catalyzing the calcium-independent transfer of a fatty acyl group at the sn-1 position of phosphatidylcholine (PC) and other glycerophospholipids to the primary amine of phosphatidylethanolamine (PE), forming N-acylphosphatidylethanolamine (NAPE), which serves as precursor for N-acylethanolamines (NAEs). Exhibits high N-acyltransferase activity and low phospholipase A1/2 activity. Required for complete organelle rupture and degradation that occur during eye lens terminal differentiation, when fiber cells that compose the lens degrade all membrane-bound organelles in order to provide lens with transparency to allow the passage of light. Organelle membrane degradation is probably catalyzed by the phospholipase activity. Plays a role in phospholipid metabolism and adipogenesis. The protein is Phospholipase A and acyltransferase 3 of Pongo abelii (Sumatran orangutan).